The sequence spans 574 residues: Septation ring formation regulator EzrA (574 aa).

Residues 1–7 (MSSGLIL) lie on the Extracellular side of the membrane. Residues 8-26 (LIVAIVLLVIIAYLVGVII) traverse the membrane as a helical segment. Over 27–574 (RKRNDTLITS…YEKTRERIRF (548 aa)) the chain is Cytoplasmic. Coiled-coil stretches lie at residues 102–131 (NFIR…REAL), 161–190 (ENED…FVAL), 276–379 (VTLD…QQEK), and 459–493 (QLEA…NLEE).

It belongs to the EzrA family.

The protein resides in the cell membrane. Functionally, negative regulator of FtsZ ring formation; modulates the frequency and position of FtsZ ring formation. Inhibits FtsZ ring formation at polar sites. Interacts either with FtsZ or with one of its binding partners to promote depolymerization. The polypeptide is Septation ring formation regulator EzrA (Streptococcus equi subsp. zooepidemicus (strain MGCS10565)).